A 436-amino-acid polypeptide reads, in one-letter code: Xylose isomerase (436 aa).

Mg(2+) contacts are provided by Asp-306 and Asp-308.

Belongs to the xylose isomerase family. As to quaternary structure, homotetramer. It depends on Mg(2+) as a cofactor.

The protein localises to the cytoplasm. It carries out the reaction alpha-D-xylose = alpha-D-xylulofuranose. The sequence is that of Xylose isomerase from Sinorhizobium fredii (strain NBRC 101917 / NGR234).